Here is a 370-residue protein sequence, read N- to C-terminus: 4-hydroxy-3-methylbut-2-en-1-yl diphosphate synthase (flavodoxin) (370 aa).

4 residues coordinate [4Fe-4S] cluster: Cys-270, Cys-273, Cys-305, and Glu-312.

It belongs to the IspG family. The cofactor is [4Fe-4S] cluster.

It catalyses the reaction (2E)-4-hydroxy-3-methylbut-2-enyl diphosphate + oxidized [flavodoxin] + H2O + 2 H(+) = 2-C-methyl-D-erythritol 2,4-cyclic diphosphate + reduced [flavodoxin]. Its pathway is isoprenoid biosynthesis; isopentenyl diphosphate biosynthesis via DXP pathway; isopentenyl diphosphate from 1-deoxy-D-xylulose 5-phosphate: step 5/6. Its function is as follows. Converts 2C-methyl-D-erythritol 2,4-cyclodiphosphate (ME-2,4cPP) into 1-hydroxy-2-methyl-2-(E)-butenyl 4-diphosphate. This is 4-hydroxy-3-methylbut-2-en-1-yl diphosphate synthase (flavodoxin) from Ectopseudomonas mendocina (strain ymp) (Pseudomonas mendocina).